Consider the following 161-residue polypeptide: Urocortin-3 (161 aa).

A signal peptide spans 1-21 (MLMPVHFLLLLLLLLGGPRTG). The propeptide occupies 22–118 (LPHKFYKAKP…QDTAKSPHRT (97 aa)). The interval 64–118 (SRDASSGEEEEGKEKKTFPISGARGGARGTRYRYVSQAQPRGKPRQDTAKSPHRT) is disordered. The residue at position 157 (I157) is an Isoleucine amide.

It belongs to the sauvagine/corticotropin-releasing factor/urotensin I family. Binds with high affinity to CRF receptors 2-alpha and 2-beta.

Its subcellular location is the secreted. In terms of biological role, suppresses food intake, delays gastric emptying and decreases heat-induced edema. Might represent an endogenous ligand for maintaining homeostasis after stress. This is Urocortin-3 (UCN3) from Homo sapiens (Human).